A 5911-amino-acid chain; its full sequence is Nonribosomal peptide synthetase 30 (5911 aa).

The interval 1 to 22 (MVPEKPTAQSKSGIGEPFRAGD) is disordered. An adenylation 1 region spans residues 352 to 754 (ALIQPSSTAV…GRKDAQVKIR (403 aa)). The Carrier 1 domain maps to 891–968 (PRPFSVEYSL…EAAAIVARGT (78 aa)). S928 carries the O-(pantetheine 4'-phosphoryl)serine modification. Residues 1007 to 1422 (EDAFPCTPLQ…ERLIFVIDQL (416 aa)) are condensation 1. The segment at 1467–1865 (ERALSQPDRP…SLMFVGRKAD (399 aa)) is adenylation 2. In terms of domain architecture, Carrier 2 spans 2001–2077 (QPTSELEAEM…NICSHSYYCS (77 aa)). An O-(pantetheine 4'-phosphoryl)serine modification is found at S2038. The tract at residues 2121–2538 (QDAYPCTPLQ…GPDINMSDIG (418 aa)) is condensation 2. Residues 2568–2977 (EEQARLRPEA…GRKDSQVKIR (410 aa)) are adenylation 3. Residues 3110–3186 (QPSTNAQREL…LIADNSKSIK (77 aa)) enclose the Carrier 3 domain. Position 3147 is an O-(pantetheine 4'-phosphoryl)serine (S3147). The condensation 3 stretch occupies residues 3227 to 3652 (VQDAYPCTPL…LELVIQAFMA (426 aa)). Residues 3701-4108 (EERVREQPNA…GRKDSQVKIR (408 aa)) form an adenylation 4 region. Residues 4248-4325 (PPTTPLECQM…DIIATMTKNK (78 aa)) enclose the Carrier 4 domain. S4285 is subject to O-(pantetheine 4'-phosphoryl)serine. Positions 4326-4347 (ATGASRRLPRDDDEPIPHTKYA) are disordered. Residues 4353 to 4793 (SYAQGRLWFL…SLPLLTEDGR (441 aa)) are condensation 4. The segment at 4819 to 5231 (FKEQVSRHPN…GRMDVQVKIR (413 aa)) is adenylation 5. The 77-residue stretch at 5360 to 5436 (KPTTDMEVAL…ALARRQEEIV (77 aa)) folds into the Carrier 5 domain. S5397 is subject to O-(pantetheine 4'-phosphoryl)serine. The condensation 5 stretch occupies residues 5474-5828 (VEDMLPLTSM…GIKMKLHFFT (355 aa)).

This sequence belongs to the NRP synthetase family.

The protein operates within secondary metabolite biosynthesis. Nonribosomal peptide synthetase; part of the gene cluster that mediates the biosynthesis of sansalvamide, a cyclic pentadepsipeptide that shows promising results as potential anti-cancer drug. The nonribosmal peptide synthetase NRPS30 produces sansalvamide by incorporating successively one phenylalanine, one leucine, one alpha-hydroxyisocaproic acid (HICA), one valine and one leucine before sansalvamide is released from by cyclization by the terminal C domain of NRPS30. The HICA residue is probably provided by reduction of alpha-ketoisocaproate by the cluster-specific aldo-keto reductase (NECHADRAFT_45914). The sequence is that of Nonribosomal peptide synthetase 30 from Fusarium vanettenii (strain ATCC MYA-4622 / CBS 123669 / FGSC 9596 / NRRL 45880 / 77-13-4) (Fusarium solani subsp. pisi).